The chain runs to 426 residues: MSITPSLSRRTVMSLLAAGLSPAFAQFRVEVSGVGLTQLPIAIASFRGEVQAPQKIGNIVRADLERSGMFRPVDTAGIVADENTRPDLAIWRQKGADAMVTGSVSPLADGRFDVRLRLWDIVRGQDLGGQSYTVAQADLRLSAHRISDFVYEKLTGEKGIFSTRIAYVTKTAQRFNLWVADSDGEGAQSALTSPEPIISPSWSPNGSQLAYVSFESRKPVIYAHDVATGKRRLLANFRGSNSAPAWSPDGKQLVATLSRDGGSQIYALGLSGGDPKRLTQSSSIDTEPAYSPDGRYIYFVSDRGGAPQIYRMSPGGGNPERVTFTGGYNISPAISPDGRWLAYVSRVGGAFKLHVMELASGTATPITDTTADESPSFAPNSRLIVYATQQQGREALMTTTLDGKIKARLSGAGGDIREPDWGPFQR.

The N-terminal stretch at 1–25 (MSITPSLSRRTVMSLLAAGLSPAFA) is a signal peptide.

It belongs to the TolB family. In terms of assembly, the Tol-Pal system is composed of five core proteins: the inner membrane proteins TolA, TolQ and TolR, the periplasmic protein TolB and the outer membrane protein Pal. They form a network linking the inner and outer membranes and the peptidoglycan layer.

The protein localises to the periplasm. Part of the Tol-Pal system, which plays a role in outer membrane invagination during cell division and is important for maintaining outer membrane integrity. This Polaromonas sp. (strain JS666 / ATCC BAA-500) protein is Tol-Pal system protein TolB.